The primary structure comprises 148 residues: Protein Turandot Z (148 aa).

A signal peptide spans 1 to 23; that stretch reads MYFAIRLSFVLAVLFCLTGNGSA.

The protein belongs to the Turandot family.

The protein resides in the secreted. In terms of biological role, a humoral factor that may play a role in stress tolerance. The chain is Protein Turandot Z from Drosophila sechellia (Fruit fly).